The sequence spans 125 residues: Large ribosomal subunit protein bL12 (125 aa).

The protein belongs to the bacterial ribosomal protein bL12 family. In terms of assembly, homodimer. Part of the ribosomal stalk of the 50S ribosomal subunit. Forms a multimeric L10(L12)X complex, where L10 forms an elongated spine to which 2 to 4 L12 dimers bind in a sequential fashion. Binds GTP-bound translation factors.

Forms part of the ribosomal stalk which helps the ribosome interact with GTP-bound translation factors. Is thus essential for accurate translation. This is Large ribosomal subunit protein bL12 from Francisella tularensis subsp. holarctica (strain FTNF002-00 / FTA).